The following is a 160-amino-acid chain: Nucleotide-binding protein VV1_2655 (160 aa).

The protein belongs to the YajQ family.

Functionally, nucleotide-binding protein. The protein is Nucleotide-binding protein VV1_2655 of Vibrio vulnificus (strain CMCP6).